We begin with the raw amino-acid sequence, 831 residues long: Translation initiation factor IF-2 (831 aa).

The tr-type G domain maps to 329 to 499 (TRAPVVTVMG…LLISEMQDLK (171 aa)). Residues 338–345 (GHVDHGKT) form a G1 region. Position 338–345 (338–345 (GHVDHGKT)) interacts with GTP. The tract at residues 363–367 (GITQH) is G2. Residues 385–388 (DTPG) are G3. GTP-binding positions include 385–389 (DTPGH) and 439–442 (NKID). The segment at 439 to 442 (NKID) is G4. The interval 475–477 (SAL) is G5.

Belongs to the TRAFAC class translation factor GTPase superfamily. Classic translation factor GTPase family. IF-2 subfamily.

Its subcellular location is the cytoplasm. One of the essential components for the initiation of protein synthesis. Protects formylmethionyl-tRNA from spontaneous hydrolysis and promotes its binding to the 30S ribosomal subunits. Also involved in the hydrolysis of GTP during the formation of the 70S ribosomal complex. The polypeptide is Translation initiation factor IF-2 (Rickettsia typhi (strain ATCC VR-144 / Wilmington)).